The following is a 255-amino-acid chain: 3-deoxy-manno-octulosonate cytidylyltransferase (255 aa).

It belongs to the KdsB family.

The protein resides in the cytoplasm. The catalysed reaction is 3-deoxy-alpha-D-manno-oct-2-ulosonate + CTP = CMP-3-deoxy-beta-D-manno-octulosonate + diphosphate. The protein operates within nucleotide-sugar biosynthesis; CMP-3-deoxy-D-manno-octulosonate biosynthesis; CMP-3-deoxy-D-manno-octulosonate from 3-deoxy-D-manno-octulosonate and CTP: step 1/1. It functions in the pathway bacterial outer membrane biogenesis; lipopolysaccharide biosynthesis. Its function is as follows. Activates KDO (a required 8-carbon sugar) for incorporation into bacterial lipopolysaccharide in Gram-negative bacteria. This is 3-deoxy-manno-octulosonate cytidylyltransferase from Hahella chejuensis (strain KCTC 2396).